The chain runs to 458 residues: Smoothelin-like protein 2 (458 aa).

Positions 24–88 form a coiled coil; it reads LEGAVRALHE…RQVESLGLTT (65 aa). Disordered regions lie at residues 87 to 111, 123 to 142, and 151 to 312; these read TTGL…RAPR, FSLS…SELE, and IIEN…GAQA. The segment covering 94–104 has biased composition (pro residues); sequence PGTPSPPPAPG. A Phosphothreonine modification is found at threonine 96. Phosphoserine occurs at positions 98, 126, and 131. A compositionally biased stretch (basic and acidic residues) spans 131-142; it reads SLDHHDEASELE. Low complexity-rich tracts occupy residues 158–167 and 209–220; these read PGADPGDGPP and TSATALSPTSAA. Positions 225–244 are enriched in polar residues; sequence LSSSPSEATTPWTPSPSEKN. Residues 245-254 are compositionally biased toward low complexity; sequence SSLPRSLSSS. Phosphoserine is present on residues serine 252, serine 254, and serine 267. Residues 270–283 show a composition bias toward pro residues; that stretch reads LVTPPQSPPSPQPP. Residue threonine 272 is modified to Phosphothreonine. A Phosphoserine modification is found at serine 276. Positions 290–299 are enriched in basic and acidic residues; it reads RPGERRRELV. Residues 300–310 show a composition bias toward polar residues; it reads RSQTLPRTSGA. Serine 341 bears the Phosphoserine mark. The Calponin-homology (CH) domain maps to 348-455; sequence SSIKQILLEW…YVQSLYNHLR (108 aa).

Belongs to the smoothelin family.

The polypeptide is Smoothelin-like protein 2 (SMTNL2) (Bos taurus (Bovine)).